The sequence spans 484 residues: Trigger factor (484 aa).

The PPIase FKBP-type domain maps to 162–243 (GDFISIDLSA…VKSVKERELP (82 aa)). The disordered stretch occupies residues 427–484 (DGNTIDTSEFFGKPPENDVTDLLDDDADGDAGVDADGDTENSAEPADADSADAAQGAG). The segment covering 444-476 (DVTDLLDDDADGDAGVDADGDTENSAEPADADS) has biased composition (acidic residues).

It belongs to the FKBP-type PPIase family. Tig subfamily.

The protein localises to the cytoplasm. It carries out the reaction [protein]-peptidylproline (omega=180) = [protein]-peptidylproline (omega=0). Its function is as follows. Involved in protein export. Acts as a chaperone by maintaining the newly synthesized protein in an open conformation. Functions as a peptidyl-prolyl cis-trans isomerase. This Mycobacterium marinum (strain ATCC BAA-535 / M) protein is Trigger factor.